The primary structure comprises 457 residues: Tubulin alpha chain (457 aa).

GTP is bound by residues Gln12, Glu77, Ser146, Gly150, Thr151, Thr186, Asn213, and Asn235. Residue Glu77 coordinates Mg(2+).

The protein belongs to the tubulin family. Dimer of alpha and beta chains. A typical microtubule is a hollow water-filled tube with an outer diameter of 25 nm and an inner diameter of 15 nM. Alpha-beta heterodimers associate head-to-tail to form protofilaments running lengthwise along the microtubule wall with the beta-tubulin subunit facing the microtubule plus end conferring a structural polarity. Microtubules usually have 13 protofilaments but different protofilament numbers can be found in some organisms and specialized cells. Mg(2+) serves as cofactor. Post-translationally, undergoes a tyrosination/detyrosination cycle, the cyclic removal and re-addition of a C-terminal tyrosine residue by the enzymes tubulin tyrosine carboxypeptidase (TTCP) and tubulin tyrosine ligase (TTL), respectively.

Its subcellular location is the cytoplasm. It is found in the cytoskeleton. The enzyme catalyses GTP + H2O = GDP + phosphate + H(+). In terms of biological role, tubulin is the major constituent of microtubules, a cylinder consisting of laterally associated linear protofilaments composed of alpha- and beta-tubulin heterodimers. Microtubules grow by the addition of GTP-tubulin dimers to the microtubule end, where a stabilizing cap forms. Below the cap, tubulin dimers are in GDP-bound state, owing to GTPase activity of alpha-tubulin. This is Tubulin alpha chain (tubA) from Dictyostelium discoideum (Social amoeba).